Reading from the N-terminus, the 512-residue chain is Putative B3 domain-containing protein REM4 (512 aa).

A DNA-binding region (TF-B3 1) is located at residues 11 to 103 (NKAFFIIDLS…VFHVSPFGRS (93 aa)). Residues 111–145 (SSSTSDDDDDERTVFDDDEDDDVGDDDDNSISEDD) form a disordered region. The segment covering 115-145 (SDDDDDERTVFDDDEDDDVGDDDDNSISEDD) has biased composition (acidic residues). DNA-binding regions (TF-B3) lie at residues 169–265 (YLVA…LCPN) and 307–403 (ILTF…CSKV). The interval 408 to 465 (SSDGHKTADRKPRMTDQAPLAEEQTDNRVEKRAQVTEEGGPSRSTRADPGNLQQKQPC) is disordered. Basic and acidic residues-rich tracts occupy residues 410–421 (DGHKTADRKPRM) and 432–442 (TDNRVEKRAQV).

Its subcellular location is the nucleus. This Arabidopsis thaliana (Mouse-ear cress) protein is Putative B3 domain-containing protein REM4 (REM4).